We begin with the raw amino-acid sequence, 284 residues long: MGESWAARGAEGAPARMPLVLTALWAAVVVLELAYVMVLGPGPPPLGPLARALQLALAAYQLLNLLGNVVLFLRSDPSIRGVMLAGRGLGQGWAYCYQCQSQVPPRSGHCSACRVCILRRDHHCRLLGCCVGFHNYRPFLCLLLHSAGVLLHISVLLGPALSALLQAHSALYTVALLLLPWLMLLTGKVSLAQFALAFVVDTCVAGALLCGAGLLFHGMLLLRGQTTWEWARGHHCYDLGTCHNLQAALGPRWALVWFWPFLASPLPGDGISFQTPGDVGLVTS.

The Cytoplasmic portion of the chain corresponds to 1–18 (MGESWAARGAEGAPARMP). The helical transmembrane segment at 19 to 39 (LVLTALWAAVVVLELAYVMVL) threads the bilayer. Over 40–52 (GPGPPPLGPLARA) the chain is Extracellular. The helical transmembrane segment at 53–73 (LQLALAAYQLLNLLGNVVLFL) threads the bilayer. Residues 74–137 (RSDPSIRGVM…GCCVGFHNYR (64 aa)) are Cytoplasmic-facing. The 51-residue stretch at 94 to 144 (AYCYQCQSQVPPRSGHCSACRVCILRRDHHCRLLGCCVGFHNYRPFLCLLL) folds into the DHHC domain. The S-palmitoyl cysteine intermediate role is filled by Cys124. Residues 138-158 (PFLCLLLHSAGVLLHISVLLG) form a helical membrane-spanning segment. At 159 to 166 (PALSALLQ) the chain is on the extracellular side. The helical transmembrane segment at 167 to 187 (AHSALYTVALLLLPWLMLLTG) threads the bilayer. At 188 to 195 (KVSLAQFA) the chain is on the cytoplasmic side. The helical transmembrane segment at 196–216 (LAFVVDTCVAGALLCGAGLLF) threads the bilayer. Residues 217-284 (HGMLLLRGQT…TPGDVGLVTS (68 aa)) are Extracellular-facing.

It belongs to the DHHC palmitoyltransferase family.

It localises to the membrane. The catalysed reaction is L-cysteinyl-[protein] + hexadecanoyl-CoA = S-hexadecanoyl-L-cysteinyl-[protein] + CoA. In terms of biological role, probable palmitoyltransferase that could catalyze the addition of palmitate onto various protein substrates. The sequence is that of Probable palmitoyltransferase ZDHHC24 from Mus musculus (Mouse).